Here is a 432-residue protein sequence, read N- to C-terminus: Adenylosuccinate synthetase (432 aa).

GTP contacts are provided by residues 13-19 and 41-43; these read GDEGKGK and GHT. The active-site Proton acceptor is the Asp-14. Residues Asp-14 and Gly-41 each coordinate Mg(2+). Residues 14-17, 39-42, Thr-130, Arg-144, Gln-225, Thr-240, and Arg-304 contribute to the IMP site; these read DEGK and NAGH. His-42 serves as the catalytic Proton donor. 300 to 306 is a substrate binding site; the sequence is ATTGRRR. Residues Arg-306, 332–334, and 415–417 contribute to the GTP site; these read KLD and STG.

Belongs to the adenylosuccinate synthetase family. In terms of assembly, homodimer. Mg(2+) serves as cofactor.

The protein localises to the cytoplasm. It catalyses the reaction IMP + L-aspartate + GTP = N(6)-(1,2-dicarboxyethyl)-AMP + GDP + phosphate + 2 H(+). It participates in purine metabolism; AMP biosynthesis via de novo pathway; AMP from IMP: step 1/2. Plays an important role in the de novo pathway of purine nucleotide biosynthesis. Catalyzes the first committed step in the biosynthesis of AMP from IMP. In Citrobacter koseri (strain ATCC BAA-895 / CDC 4225-83 / SGSC4696), this protein is Adenylosuccinate synthetase.